A 143-amino-acid polypeptide reads, in one-letter code: Peptide methionine sulfoxide reductase MsrB (143 aa).

Positions 16–139 (DAELRRRLTP…NSAALNFEAK (124 aa)) constitute a MsrB domain. The Zn(2+) site is built by Cys55, Cys58, Cys104, and Cys107. Cys128 (nucleophile) is an active-site residue.

The protein belongs to the MsrB Met sulfoxide reductase family. The cofactor is Zn(2+).

It carries out the reaction L-methionyl-[protein] + [thioredoxin]-disulfide + H2O = L-methionyl-(R)-S-oxide-[protein] + [thioredoxin]-dithiol. This chain is Peptide methionine sulfoxide reductase MsrB, found in Burkholderia pseudomallei (strain 1710b).